The following is a 149-amino-acid chain: Protegrin-4 (149 aa).

The signal sequence occupies residues 1–29 (METQRASLCLGRWSLWLLLLALVVPSASA). Residues 30–130 (QALSYREAVL…DITCNEVQGV (101 aa)) constitute a propeptide that is removed on maturation. Positions 61–80 (DQPPKADEDPGTPKPVSFTV) are disordered. 4 cysteine pairs are disulfide-bonded: Cys85-Cys96, Cys107-Cys124, Cys136-Cys145, and Cys138-Cys143. Arg148 is subject to Arginine amide.

The protein belongs to the cathelicidin family.

It localises to the secreted. Microbicidal activity. This Sus scrofa (Pig) protein is Protegrin-4 (NPG4).